An 89-amino-acid chain; its full sequence is Small ribosomal subunit protein uS17 (89 aa).

This sequence belongs to the universal ribosomal protein uS17 family. Part of the 30S ribosomal subunit.

One of the primary rRNA binding proteins, it binds specifically to the 5'-end of 16S ribosomal RNA. The chain is Small ribosomal subunit protein uS17 from Variovorax paradoxus (strain S110).